The following is a 147-amino-acid chain: MSFTDKQEALVNSSYEAFKQNLSGYSVFFYTVILEKAPAAKGLFSFLKDSAGVQDSPQLQAHAEKVFGLVRDSASQLRATGGVVLGDAALGAIHIQKGVVDPHFVVVKEALLKTIKEAAGDKWSEELSTAWEVAYDALATEIKKAMS.

A Globin domain is found at 2–147 (SFTDKQEALV…LATEIKKAMS (146 aa)). Residues Tyr25 and Tyr30 each carry the nitrated tyrosine modification. Ser45 lines the heme b pocket. Ser45 is modified (phosphoserine). His62 contacts O2. Heme b is bound by residues Lys65, His94, and Lys97. Position 135 is a nitrated tyrosine (Tyr135).

It belongs to the plant globin family. Monomer. Post-translationally, nitrated in effective nodules and particularly in hypoxic conditions; this mechanism may play a protective role in the symbiosis by buffering toxic peroxynitrite NO(2)(-). Nitration level decrease during nodule senescence. Phosphorylation at Ser-45 disrupts the molecular environment of its porphyrin ring oxygen binding pocket, thus leading to a reduced oxygen consumption and to the delivery of oxygen O(2) to symbiosomes. As to expression, root nodules.

The protein localises to the cytoplasm. It is found in the cytosol. The protein resides in the nucleus. In terms of biological role, leghemoglobin that reversibly binds oxygen O(2) through a pentacoordinated heme iron. In root nodules, facilitates the diffusion of oxygen to the bacteroids while preventing the bacterial nitrogenase from being inactivated by buffering dioxygen, nitric oxide and carbon monoxide, and promoting the formation of reactive oxygen species (ROS, e.g. H(2)O(2)). This role is essential for symbiotic nitrogen fixation (SNF). This is Leghemoglobin 6 from Medicago truncatula (Barrel medic).